The primary structure comprises 143 residues: MELSPNNQIEDRKPILTADGLVQTSNSPFEPTISQETQTSNGIGTQCQLTVDQLDIEILPIIYDVVRCVEKDPLENAVKLRESQDCNHKIFELQKRFESAREQIRQLPGIDYNKDEQLQRLELLRNQFKLKQQLIRKYKDTEF.

Positions 84-141 form a coiled coil; it reads QDCNHKIFELQKRFESAREQIRQLPGIDYNKDEQLQRLELLRNQFKLKQQLIRKYKDT.

Belongs to the Mediator complex subunit 9 family. In terms of assembly, component of the Mediator complex.

It is found in the nucleus. Functionally, component of the Mediator complex, a coactivator involved in the regulated transcription of nearly all RNA polymerase II-dependent genes. Mediator functions as a bridge to convey information from gene-specific regulatory proteins to the basal RNA polymerase II transcription machinery. Mediator is recruited to promoters by direct interactions with regulatory proteins and serves as a scaffold for the assembly of a functional preinitiation complex with RNA polymerase II and the general transcription factors. The sequence is that of Mediator of RNA polymerase II transcription subunit 9 (MED9) from Drosophila pseudoobscura pseudoobscura (Fruit fly).